Here is a 551-residue protein sequence, read N- to C-terminus: 2,3-bisphosphoglycerate-independent phosphoglycerate mutase (551 aa).

Residues D22 and S74 each contribute to the Mn(2+) site. S74 (phosphoserine intermediate) is an active-site residue. Substrate contacts are provided by residues H135, 165 to 166 (RD), R201, R208, and 281 to 284 (RGDR). D319 is a Mn(2+) binding site. K356 provides a ligand contact to substrate. Mn(2+)-binding residues include D424, H428, D465, H466, and H495.

The protein belongs to the BPG-independent phosphoglycerate mutase family. Monomer. Requires Mn(2+) as cofactor.

The protein localises to the cytoplasm. It carries out the reaction (2R)-2-phosphoglycerate = (2R)-3-phosphoglycerate. It participates in carbohydrate degradation; glycolysis; pyruvate from D-glyceraldehyde 3-phosphate: step 3/5. In terms of biological role, catalyzes the interconversion of 2-phosphoglycerate (2-PGA) and 3-phosphoglycerate (3-PGA). This is 2,3-bisphosphoglycerate-independent phosphoglycerate mutase from Trypanosoma brucei brucei (strain 927/4 GUTat10.1).